Here is a 513-residue protein sequence, read N- to C-terminus: 2-isopropylmalate synthase (513 aa).

Residues 5-268 (LIIFDTTLRD…DVGIDTTQIV (264 aa)) enclose the Pyruvate carboxyltransferase domain. 4 residues coordinate Mn(2+): Asp14, His202, His204, and Asn239. The segment at 394-513 (RFISLSQRSE…KAVQKINPQI (120 aa)) is regulatory domain.

Belongs to the alpha-IPM synthase/homocitrate synthase family. LeuA type 1 subfamily. As to quaternary structure, homodimer. Mn(2+) serves as cofactor.

It is found in the cytoplasm. The enzyme catalyses 3-methyl-2-oxobutanoate + acetyl-CoA + H2O = (2S)-2-isopropylmalate + CoA + H(+). It participates in amino-acid biosynthesis; L-leucine biosynthesis; L-leucine from 3-methyl-2-oxobutanoate: step 1/4. In terms of biological role, catalyzes the condensation of the acetyl group of acetyl-CoA with 3-methyl-2-oxobutanoate (2-ketoisovalerate) to form 3-carboxy-3-hydroxy-4-methylpentanoate (2-isopropylmalate). This is 2-isopropylmalate synthase from Cupriavidus metallidurans (strain ATCC 43123 / DSM 2839 / NBRC 102507 / CH34) (Ralstonia metallidurans).